Here is a 435-residue protein sequence, read N- to C-terminus: Glutamyl-tRNA reductase (435 aa).

Substrate contacts are provided by residues 49 to 52 (TCNR), serine 109, 114 to 116 (EGQ), and glutamine 120. Residue cysteine 50 is the Nucleophile of the active site. Position 198 to 203 (198 to 203 (GAGRMS)) interacts with NADP(+).

This sequence belongs to the glutamyl-tRNA reductase family. Homodimer.

It carries out the reaction (S)-4-amino-5-oxopentanoate + tRNA(Glu) + NADP(+) = L-glutamyl-tRNA(Glu) + NADPH + H(+). The protein operates within porphyrin-containing compound metabolism; protoporphyrin-IX biosynthesis; 5-aminolevulinate from L-glutamyl-tRNA(Glu): step 1/2. Its pathway is porphyrin-containing compound metabolism; chlorophyll biosynthesis. Catalyzes the NADPH-dependent reduction of glutamyl-tRNA(Glu) to glutamate 1-semialdehyde (GSA). The protein is Glutamyl-tRNA reductase of Prochlorococcus marinus (strain MIT 9211).